Consider the following 278-residue polypeptide: Probable velvet family sexual development regulator SCHCODRAFT_28806 (278 aa).

The Velvet domain maps to 51 to 255 (GRTIRASLDE…ARVGVRLSVR (205 aa)). Positions 257–278 (TGKKATTKRRKRSDSFDEDDSS) are disordered.

The protein belongs to the velvet family.

It localises to the nucleus. In terms of biological role, velvet-domain-containing protein that probably acts as a positive regulator of sexual development. This Schizophyllum commune (strain H4-8 / FGSC 9210) (Split gill fungus) protein is Probable velvet family sexual development regulator SCHCODRAFT_28806.